The sequence spans 368 residues: Cell division protein FtsZ 1 (368 aa).

GTP-binding positions include 52–56 (GGGCN), 139–141 (GTG), glutamate 170, arginine 174, and aspartate 217.

This sequence belongs to the FtsZ family. In terms of assembly, homodimer. Polymerizes to form a dynamic ring structure in a strictly GTP-dependent manner. Interacts directly with several other division proteins.

It localises to the cytoplasm. Essential cell division protein that forms a contractile ring structure (Z ring) at the future cell division site. The regulation of the ring assembly controls the timing and the location of cell division. One of the functions of the FtsZ ring is to recruit other cell division proteins to the septum to produce a new cell wall between the dividing cells. Binds GTP and shows GTPase activity. In Archaeoglobus fulgidus (strain ATCC 49558 / DSM 4304 / JCM 9628 / NBRC 100126 / VC-16), this protein is Cell division protein FtsZ 1.